The sequence spans 214 residues: Calcineurin B homologous protein 3 (214 aa).

A lipid anchor (N-myristoyl glycine) is attached at G2. Residues 110-145 (FRKEKLKFLFHMYDADYDGIITLQEYKNVLDELMSG) form the EF-hand domain. D123, D125, D127, and E134 together coordinate Ca(2+).

Belongs to the calcineurin regulatory subunit family. CHP subfamily. In terms of assembly, monomer. Homodimer. Expressed in the bipotential gonad by E4.5 and expressed in both the testis and ovary by E5.5, but with expression higher in the testis. Expressed in the testis cords but also at low levels in the interstitium. In the ovary, expression is principally in the ovarian cortex, but also in the medulla. Also expressed in the embryonic brain, with expression highest in the region between the nasal placode and olfactory bulb. Also expressed in the embryonic heart and tail.

Its subcellular location is the nucleus. It is found in the cytoplasm. It localises to the membrane. The protein resides in the cell membrane. The protein localises to the cell projection. Its subcellular location is the lamellipodium. It is found in the ruffle membrane. Its function is as follows. Functions as an integral cofactor in cell pH regulation by controlling plasma membrane-type Na(+)/H(+) exchange activity. Promotes the induction of hematopoietic stem cell differentiation toward megakaryocytic lineage. Essential for the coupling of ERK cascade activation with the expression of ETS family genes in megakaryocytic differentiation. Also involved in granulocytic differentiation in a ERK-dependent manner. Inhibits the phosphatase activity of calcineurin. This is Calcineurin B homologous protein 3 from Gallus gallus (Chicken).